The primary structure comprises 1209 residues: Protein phosphatase 1 regulatory subunit 26 (1209 aa).

Disordered regions lie at residues 57-91, 145-279, 291-471, 501-532, 555-694, 733-836, 848-1033, 1052-1072, and 1118-1209; these read DGAARGTSDERAAQRGHRAEGCHDARPAAKPTVHK, SGAA…HRQG, KPPR…VERS, GSDGSLSASPLFYSPNVPSRSDGDSSSVDSDD, GESC…EDLD, EQLG…SNDS, KAKE…FAHQ, RGGVGSERDKGSEGPARGLPS, and AFRE…VVKV. The span at 63–91 shows a compositional bias: basic and acidic residues; the sequence is TSDERAAQRGHRAEGCHDARPAAKPTVHK. Positions 201–219 are enriched in low complexity; it reads QVGSSKDQGSASPVSVSSD. A compositionally biased stretch (basic and acidic residues) spans 226–255; that stretch reads IRAEIEQFLNEKRQHETQKCDGSVEKKPDT. Positions 301-321 are enriched in polar residues; that stretch reads QPRSLRSKVTTTQENEGSTKP. Residues 352 to 362 show a composition bias toward low complexity; it reads SAAQASEASDS. Residues 442-454 are compositionally biased toward basic and acidic residues; that stretch reads DTDHAPKLLKETK. Basic and acidic residues-rich tracts occupy residues 609 to 637, 667 to 685, and 757 to 766; these read KMQEVVKDGSQDADHSQGRAEPGHERRDL, KTDEARRLDEKESSEDKSS, and SKRDSGEGPG. 2 stretches are compositionally biased toward low complexity: residues 821–836 and 852–861; these read PGSLSDDSSSVDSNDS and SVSSSEVQAE. Ser-1161 bears the Phosphoserine mark. Residues 1187 to 1209 show a composition bias toward low complexity; that stretch reads GSDASDFSDTSTEDSGGSSVVKV.

As to quaternary structure, interacts with UTP20 and PPP1CA. As to expression, ubiquitous in normal tissues. Expressed in numerous adenocarcinoma cell lines.

The protein localises to the nucleus. The protein resides in the nucleolus. Inhibits phosphatase activity of protein phosphatase 1 (PP1) complexes. May positively regulate cell proliferation. The protein is Protein phosphatase 1 regulatory subunit 26 (PPP1R26) of Homo sapiens (Human).